The sequence spans 206 residues: Ribosomal RNA small subunit methyltransferase G (206 aa).

S-adenosyl-L-methionine contacts are provided by residues Gly73, Leu78, 124 to 125 (VE), and Arg139.

This sequence belongs to the methyltransferase superfamily. RNA methyltransferase RsmG family.

Its subcellular location is the cytoplasm. The enzyme catalyses guanosine(527) in 16S rRNA + S-adenosyl-L-methionine = N(7)-methylguanosine(527) in 16S rRNA + S-adenosyl-L-homocysteine. Functionally, specifically methylates the N7 position of guanine in position 527 of 16S rRNA. The polypeptide is Ribosomal RNA small subunit methyltransferase G (Yersinia pseudotuberculosis serotype O:1b (strain IP 31758)).